We begin with the raw amino-acid sequence, 89 residues long: Small ribosomal subunit protein uS17 (89 aa).

The protein belongs to the universal ribosomal protein uS17 family. Part of the 30S ribosomal subunit.

One of the primary rRNA binding proteins, it binds specifically to the 5'-end of 16S ribosomal RNA. This is Small ribosomal subunit protein uS17 from Aromatoleum aromaticum (strain DSM 19018 / LMG 30748 / EbN1) (Azoarcus sp. (strain EbN1)).